Here is a 56-residue protein sequence, read N- to C-terminus: MKTTRKGLRDGELEKDTYGRLTCSECGESLKKKNDPDEVFSVRICADCGREWKELR.

Residues cysteine 23, cysteine 26, cysteine 45, and cysteine 48 each coordinate Zn(2+). 2 short sequence motifs (c(P)XCG motif) span residues 23–27 and 45–49; these read CSECG and CADCG.

In terms of assembly, monomer.

Its function is as follows. Zinc-binding protein that binds one zinc ion. Is involved in biofilm formation, swarming and glycerol metabolism regulation. This is Zinc finger mu-protein HVO_0758 from Haloferax volcanii (strain ATCC 29605 / DSM 3757 / JCM 8879 / NBRC 14742 / NCIMB 2012 / VKM B-1768 / DS2) (Halobacterium volcanii).